The chain runs to 420 residues: Acyl-coenzyme A amino acid N-acyltransferase 2 (420 aa).

Catalysis depends on charge relay system residues S235, D329, and H363. The Microbody targeting signal signature appears at S418–L420.

The protein belongs to the C/M/P thioester hydrolase family.

It localises to the peroxisome. Functionally, acyltransferase which efficiently conjugates very long-chain and long-chain fatty acids to taurine. Shows no conjugation activity in the presence of glycine. The polypeptide is Acyl-coenzyme A amino acid N-acyltransferase 2 (Mus musculus (Mouse)).